The primary structure comprises 292 residues: tRNA (guanine-N(1)-)-methyltransferase (292 aa).

S-adenosyl-L-methionine contacts are provided by residues G151 and 175–180 (IGDYVL).

The protein belongs to the RNA methyltransferase TrmD family. In terms of assembly, homodimer.

The protein resides in the cytoplasm. It catalyses the reaction guanosine(37) in tRNA + S-adenosyl-L-methionine = N(1)-methylguanosine(37) in tRNA + S-adenosyl-L-homocysteine + H(+). Its function is as follows. Specifically methylates guanosine-37 in various tRNAs. The sequence is that of tRNA (guanine-N(1)-)-methyltransferase from Corynebacterium diphtheriae (strain ATCC 700971 / NCTC 13129 / Biotype gravis).